Reading from the N-terminus, the 81-residue chain is Sulfur carrier protein TusA (81 aa).

Cysteine 19 serves as the catalytic Cysteine persulfide intermediate.

This sequence belongs to the sulfur carrier protein TusA family.

The protein localises to the cytoplasm. In terms of biological role, sulfur carrier protein which probably makes part of a sulfur-relay system. The protein is Sulfur carrier protein TusA of Shewanella baltica (strain OS223).